Consider the following 518-residue polypeptide: ATP synthase subunit alpha (518 aa).

Glycine 169–threonine 176 is a binding site for ATP.

Belongs to the ATPase alpha/beta chains family. In terms of assembly, F-type ATPases have 2 components, CF(1) - the catalytic core - and CF(0) - the membrane proton channel. CF(1) has five subunits: alpha(3), beta(3), gamma(1), delta(1), epsilon(1). CF(0) has three main subunits: a(1), b(2) and c(9-12). The alpha and beta chains form an alternating ring which encloses part of the gamma chain. CF(1) is attached to CF(0) by a central stalk formed by the gamma and epsilon chains, while a peripheral stalk is formed by the delta and b chains.

The protein localises to the cell membrane. It carries out the reaction ATP + H2O + 4 H(+)(in) = ADP + phosphate + 5 H(+)(out). In terms of biological role, produces ATP from ADP in the presence of a proton gradient across the membrane. The alpha chain is a regulatory subunit. The chain is ATP synthase subunit alpha from Enterococcus faecalis (strain ATCC 700802 / V583).